The primary structure comprises 417 residues: 4-hydroxy-3-methylbut-2-en-1-yl diphosphate synthase (flavodoxin) (417 aa).

[4Fe-4S] cluster contacts are provided by Cys-303, Cys-306, Cys-349, and Glu-356.

Belongs to the IspG family. The cofactor is [4Fe-4S] cluster.

The catalysed reaction is (2E)-4-hydroxy-3-methylbut-2-enyl diphosphate + oxidized [flavodoxin] + H2O + 2 H(+) = 2-C-methyl-D-erythritol 2,4-cyclic diphosphate + reduced [flavodoxin]. It participates in isoprenoid biosynthesis; isopentenyl diphosphate biosynthesis via DXP pathway; isopentenyl diphosphate from 1-deoxy-D-xylulose 5-phosphate: step 5/6. Converts 2C-methyl-D-erythritol 2,4-cyclodiphosphate (ME-2,4cPP) into 1-hydroxy-2-methyl-2-(E)-butenyl 4-diphosphate. This is 4-hydroxy-3-methylbut-2-en-1-yl diphosphate synthase (flavodoxin) from Mesorhizobium japonicum (strain LMG 29417 / CECT 9101 / MAFF 303099) (Mesorhizobium loti (strain MAFF 303099)).